Consider the following 430-residue polypeptide: KICSTOR complex protein kaptin (430 aa).

Residues 410–430 (RKHQQGLGDRVGPRPVEHPAS) are disordered. Basic and acidic residues predominate over residues 420 to 430 (VGPRPVEHPAS).

Part of the KICSTOR complex composed of KPTN, ITFG2, KICS2 and SZT2. SZT2 probably serves as a link between the other three proteins in the KICSTOR complex and mediates the direct interaction with the GATOR1 complex. May associate with F-actin filaments.

Its subcellular location is the lysosome membrane. It is found in the cell projection. The protein resides in the lamellipodium. It localises to the stereocilium. In terms of biological role, as part of the KICSTOR complex functions in the amino acid-sensing branch of the TORC1 signaling pathway. Recruits, in an amino acid-independent manner, the GATOR1 complex to the lysosomal membranes and allows its interaction with GATOR2 and the RAG GTPases. Functions upstream of the RAG GTPases and is required to negatively regulate mTORC1 signaling in absence of amino acids. In absence of the KICSTOR complex mTORC1 is constitutively localized to the lysosome and activated. The KICSTOR complex is also probably involved in the regulation of mTORC1 by glucose. This Mus musculus (Mouse) protein is KICSTOR complex protein kaptin.